We begin with the raw amino-acid sequence, 720 residues long: Cyclopenase penL (720 aa).

Positions 137, 141, and 313 each coordinate Cu cation.

Belongs to the tyrosinase family. Requires Cu(2+) as cofactor.

The enzyme catalyses (-)-cyclopenine = viridicatin + methyl isocyanate + H(+). The catalysed reaction is (-)-4'-methoxycyclopenine = 4'-methoxyviridicatin + methyl isocyanate + H(+). It functions in the pathway secondary metabolite biosynthesis. The protein operates within alkaloid biosynthesis. Its pathway is mycotoxin biosynthesis. In terms of biological role, cyclopenase; part of the gene cluster that mediates the biosynthesis of penigequinolones, potent insecticidal alkaloids that contain a highly modified 10-carbon prenyl group. The first stage is catalyzed by the nonribosomal peptide synthetase penN that condenses anthranilic acid and O-methyl-L-tyrosine to produce 4'-methoxycyclopeptin. 4'-methoxycyclopeptin is then converted to 4'-methoxydehydrocyclopeptin by the ketoglutarate-dependent dioxygenase penM through dehydrogenation to form a double bond between C-alpha and C-beta of the O-methyltyrosine side chain. PenM also converts its first product methoxydehydrocyclopeptin to 4'-methoxycyclopenin. The following conversion of 4'methoxycyclopenin into 4'-methoxyviridicatin is catalyzed by the cyclopenase penL. 4'-methoxyviridicatin is the precursor of quinolone natural products, and is further converted to quinolinone B. The prenyltransferase penI then catalyzes the canonical Friedel-Crafts alkylation of quinolinone B with dimethylallyl cation to yield dimethylallyl quinolone, which is subjected to FAD-dependent dehydrogenation by the FAD-linked oxidoreductase penH to yield conjugated aryl diene. The delta(3') double bond then serves as the site of the second alkylation with DMAPP catalyzed by the prenyltransferase penG to yield a carbenium ion intermediate, which can be attacked by H(2)O to yield a styrenyl quinolone containing a C3'-hydroxyprenyl chain, or undergo cyclization to yield yaequinolones J1 and J2. The conversion of the styrenyl quinolone into the tetrahydrofuran-containing yaequinolone C is performed by the FAD-dependent monooxygenase penE and involves epoxidation of the terminal C7'-C8' olefin, followed by epoxide ring opening initiated by the C3' hydroxyl group. The predicted cysteine hydrolase penJ acts as an epoxide hydrolase that enhances the rate of the 5-exo-tet cyclization step, increasing the yield of yaequinolone C. PenF catalyzes the cationic rearrangement of the epoxide formed by penE (before ring opening to produce yaequinolone C) into yaequinolone D. Finally, the short-chain dehydrogenase/reductase (SDR)-like reductase penD, catalyzes both the dehydration of yaequinolone D and the reduction of the resulting oxonium to yield penigequinolone. The chain is Cyclopenase penL from Penicillium thymicola.